The sequence spans 124 residues: Large ribosomal subunit protein bL12 (124 aa).

This sequence belongs to the bacterial ribosomal protein bL12 family. As to quaternary structure, homodimer. Part of the ribosomal stalk of the 50S ribosomal subunit. Forms a multimeric L10(L12)X complex, where L10 forms an elongated spine to which 2 to 4 L12 dimers bind in a sequential fashion. Binds GTP-bound translation factors.

Forms part of the ribosomal stalk which helps the ribosome interact with GTP-bound translation factors. Is thus essential for accurate translation. This chain is Large ribosomal subunit protein bL12, found in Phytoplasma australiense.